Consider the following 307-residue polypeptide: Ornithine carbamoyltransferase (307 aa).

Residues 50–53, Gln77, Arg101, and 128–131 contribute to the carbamoyl phosphate site; these read STRT and HPCQ. L-ornithine-binding positions include Asn160, Asp224, and 228–229; that span reads SM. Carbamoyl phosphate-binding positions include 264 to 265 and Arg292; that span reads CL.

This sequence belongs to the aspartate/ornithine carbamoyltransferase superfamily. OTCase family.

The protein resides in the cytoplasm. The catalysed reaction is carbamoyl phosphate + L-ornithine = L-citrulline + phosphate + H(+). It functions in the pathway amino-acid biosynthesis; L-arginine biosynthesis; L-arginine from L-ornithine and carbamoyl phosphate: step 1/3. With respect to regulation, inhibited by arginine, norvaline. Reversibly catalyzes the transfer of the carbamoyl group from carbamoyl phosphate (CP) to the N(epsilon) atom of ornithine (ORN) to produce L-citrulline, which is a substrate for argininosuccinate synthetase, the enzyme involved in the final step in arginine biosynthesis. This Mycolicibacterium smegmatis (strain ATCC 700084 / mc(2)155) (Mycobacterium smegmatis) protein is Ornithine carbamoyltransferase.